Consider the following 411-residue polypeptide: 2,3-bisphosphoglycerate-independent phosphoglycerate mutase (411 aa).

Belongs to the BPG-independent phosphoglycerate mutase family. A-PGAM subfamily.

The enzyme catalyses (2R)-2-phosphoglycerate = (2R)-3-phosphoglycerate. It functions in the pathway carbohydrate degradation; glycolysis; pyruvate from D-glyceraldehyde 3-phosphate: step 3/5. Functionally, catalyzes the interconversion of 2-phosphoglycerate and 3-phosphoglycerate. The sequence is that of 2,3-bisphosphoglycerate-independent phosphoglycerate mutase from Pyrobaculum neutrophilum (strain DSM 2338 / JCM 9278 / NBRC 100436 / V24Sta) (Thermoproteus neutrophilus).